The sequence spans 379 residues: MIENLISHPHHIKLVGDFFNKKLFSSISTDHPLVILTDVQVAKEILPPIVDFIHSLDYTVVPLSFPSGEKNKTWETFISLQNQLIDHDIPLGSTMIGIGGGVVLDMVGFLASTYCRGIPLFLVPTTMTAMIDACIGGKNGINLRGLKNRLGTFYLPQDVWICPEFLSTLPKKEWLYGISEAIKHGCIADASIWEFLHNYGDMLFSSREILSEFIKRNCLVKAAIVAKDPHDQHLRKILNFGHTIAHAIETLSQGCLPHGLAVSVGMMIETKISLESGIMKNPALLEQLHHLSKRFHLPTTLEELRDLIPQHLHHEFYDPENIIHALGYDKKNLSKKAIRMVMMEDAGKATSCNGIYCTVPKMAILYEILKSECYAMCNN.

NAD(+)-binding positions include 67–72 (SGEKNK), 101–105 (GVVLD), 125–126 (TT), Lys138, and Lys147. Zn(2+)-binding residues include Glu180, His242, and His258.

It belongs to the sugar phosphate cyclases superfamily. Dehydroquinate synthase family. The cofactor is NAD(+). Requires Co(2+) as cofactor. It depends on Zn(2+) as a cofactor.

Its subcellular location is the cytoplasm. It catalyses the reaction 7-phospho-2-dehydro-3-deoxy-D-arabino-heptonate = 3-dehydroquinate + phosphate. The protein operates within metabolic intermediate biosynthesis; chorismate biosynthesis; chorismate from D-erythrose 4-phosphate and phosphoenolpyruvate: step 2/7. Functionally, catalyzes the conversion of 3-deoxy-D-arabino-heptulosonate 7-phosphate (DAHP) to dehydroquinate (DHQ). In Chlamydia abortus (strain DSM 27085 / S26/3) (Chlamydophila abortus), this protein is 3-dehydroquinate synthase.